The chain runs to 430 residues: Tol-Pal system protein TolB (430 aa).

The signal sequence occupies residues 1 to 21 (MKQALRVAFGFLMLWAAVLHA).

This sequence belongs to the TolB family. In terms of assembly, the Tol-Pal system is composed of five core proteins: the inner membrane proteins TolA, TolQ and TolR, the periplasmic protein TolB and the outer membrane protein Pal. They form a network linking the inner and outer membranes and the peptidoglycan layer.

Its subcellular location is the periplasm. Functionally, part of the Tol-Pal system, which plays a role in outer membrane invagination during cell division and is important for maintaining outer membrane integrity. TolB occupies a key intermediary position in the Tol-Pal system because it communicates directly with both membrane-embedded components, Pal in the outer membrane and TolA in the inner membrane. The polypeptide is Tol-Pal system protein TolB (Salmonella choleraesuis (strain SC-B67)).